Consider the following 56-residue polypeptide: Large ribosomal subunit protein bL33 (56 aa).

Over residues 1–12 (MATKGGREKIKL) the composition is skewed to basic and acidic residues. The tract at residues 1–28 (MATKGGREKIKLESTAGTGHFYTTSKNK) is disordered. A compositionally biased stretch (polar residues) spans 15–25 (TAGTGHFYTTS).

The protein belongs to the bacterial ribosomal protein bL33 family.

This Albidiferax ferrireducens (strain ATCC BAA-621 / DSM 15236 / T118) (Rhodoferax ferrireducens) protein is Large ribosomal subunit protein bL33.